The primary structure comprises 459 residues: Exodeoxyribonuclease 7 large subunit (459 aa).

Belongs to the XseA family. Heterooligomer composed of large and small subunits.

It localises to the cytoplasm. The enzyme catalyses Exonucleolytic cleavage in either 5'- to 3'- or 3'- to 5'-direction to yield nucleoside 5'-phosphates.. Its function is as follows. Bidirectionally degrades single-stranded DNA into large acid-insoluble oligonucleotides, which are then degraded further into small acid-soluble oligonucleotides. This is Exodeoxyribonuclease 7 large subunit from Yersinia pseudotuberculosis serotype IB (strain PB1/+).